Here is a 427-residue protein sequence, read N- to C-terminus: UPF0415 protein C7orf25 homolog (427 aa).

Positions glycine 200–threonine 234 are enriched in acidic residues. Residues glycine 200–leucine 236 are disordered.

The protein belongs to the UPF0415 family.

In Danio rerio (Zebrafish), this protein is UPF0415 protein C7orf25 homolog.